A 351-amino-acid polypeptide reads, in one-letter code: Phosphoribosylformylglycinamidine cyclo-ligase (351 aa).

This sequence belongs to the AIR synthase family.

It is found in the cytoplasm. It catalyses the reaction 2-formamido-N(1)-(5-O-phospho-beta-D-ribosyl)acetamidine + ATP = 5-amino-1-(5-phospho-beta-D-ribosyl)imidazole + ADP + phosphate + H(+). It participates in purine metabolism; IMP biosynthesis via de novo pathway; 5-amino-1-(5-phospho-D-ribosyl)imidazole from N(2)-formyl-N(1)-(5-phospho-D-ribosyl)glycinamide: step 2/2. This is Phosphoribosylformylglycinamidine cyclo-ligase from Burkholderia pseudomallei (strain 1710b).